A 157-amino-acid chain; its full sequence is MATMHDKITLQLPAKPEYVSLGRLSLSGIASRAGFSYEAIEDLKIAVSEAITNSVKHAFKGEEDGEITVEYLIYEDKLEVRVSDNGTSFDLETRKQEIGPYDVGEDAEMMRIGGLGLFLIETLMDDVKLYYDEGVSVVMTKYINEKQVEENAKSIST.

The protein belongs to the anti-sigma-factor family.

The enzyme catalyses L-seryl-[protein] + ATP = O-phospho-L-seryl-[protein] + ADP + H(+). It carries out the reaction L-threonyl-[protein] + ATP = O-phospho-L-threonyl-[protein] + ADP + H(+). Its function is as follows. Negative regulator of sigma-B activity. Phosphorylates and inactivates its specific antagonist protein, RsbV. Upon phosphorylation of RsbV, RsbW is released and binds to sigma-B, thereby blocking its ability to form an RNA polymerase holoenzyme (E-sigma-B). This is Serine-protein kinase RsbW from Listeria monocytogenes serovar 1/2a (strain ATCC BAA-679 / EGD-e).